The chain runs to 613 residues: Ribosome-associated molecular chaperone SSB1 (613 aa).

The residue at position 2 (Ala2) is an N-acetylalanine. The tract at residues 2–391 (AEGVFQGAIG…ILTGQSTSDE (390 aa)) is nucleotide binding domain (NBD). 16–18 (TTY) contributes to the ATP binding site. At Thr47 the chain carries Phosphothreonine. Residues Lys73, 205–207 (GGT), 271–278 (ERAKRTLS), and Gly342 contribute to the ATP site. The tract at residues 392–402 (TKDLLLLDVAP) is inter-domain linker. The segment at 403–613 (LSLGVGMQGD…RVVTKAMSSR (211 aa)) is substrate binding domain (SBD). Residues 428 to 430 (KRR) carry the Contributes to ribosome binding motif. Phosphothreonine is present on Thr431. The interval 516 to 612 (SEEIEKMVNQ…KRVVTKAMSS (97 aa)) is lid domain (SBDalpha). Residues 574–582 (IEAALSDAL) carry the Nuclear export signal motif. The interval 601-613 (GLKRVVTKAMSSR) is required for interaction with ribosomes.

It belongs to the heat shock protein 70 family. Ssb-type Hsp70 subfamily. Binds to ribosomes. Binds close to the ribosomal tunnel exit via contacts with both ribosomal proteins RPL35, RPL39 and RPL19, and rRNA. Directly interacts with nascent polypeptides. This interaction is dependent on the ribosome-associated complex (RAC). Interacts with SSE1. Interacts with FES1. Interacts with NAP1.

It localises to the cytoplasm. It catalyses the reaction ATP + H2O = ADP + phosphate + H(+). In terms of biological role, ribosome-bound, Hsp70-type chaperone that assists in the cotranslational folding of newly synthesized proteins in the cytosol. Stimulates folding by interacting with nascent chains, binding to short, largely hydrophobic sequences exposed by unfolded proteins, thereby stabilizing longer, more slowly translated, and aggregation-prone nascent polypeptides and domains that cannot fold stably until fully synthesized. The Hsp70-protein substrate interaction depends on ATP-binding and on allosteric regulation between the NBD and the SBD. The ATP-bound state is characterized by a fast exchange rate of substrate (low affinity state), while in the ADP-bound state exchange is much slower (high affinity state). During the Hsp70 cycle, the chaperone switches between the ATP-bound state (open conformation) and the ADP-bound state (closed conformation) by major conformational rearrangements involving mainly the lid domain. Ssb cooperates with a specific Hsp40/Hsp70 co-chaperone termed the ribosome-associated complex (RAC), which stimulates the ATPase activity of the ribosome-associated pool of Ssbs and switches it to the high affinity substrate binding state. Hsp110 chaperone SSE1 and FES1 act as nucleotide exchange factors that cause substrate release. The protein is Ribosome-associated molecular chaperone SSB1 of Saccharomyces cerevisiae (strain ATCC 204508 / S288c) (Baker's yeast).